A 104-amino-acid chain; its full sequence is Nucleoid-associated protein Bsph_0039 (104 aa).

A compositionally biased stretch (low complexity) spans 1 to 12; sequence MRGMGNMQGMMK. The disordered stretch occupies residues 1–22; the sequence is MRGMGNMQGMMKKMQKMQKEMM.

It belongs to the YbaB/EbfC family. As to quaternary structure, homodimer.

The protein resides in the cytoplasm. The protein localises to the nucleoid. In terms of biological role, binds to DNA and alters its conformation. May be involved in regulation of gene expression, nucleoid organization and DNA protection. The polypeptide is Nucleoid-associated protein Bsph_0039 (Lysinibacillus sphaericus (strain C3-41)).